The following is a 772-amino-acid chain: Protein U58 (772 aa).

It belongs to the herpesviridae UL87 family.

The protein is Protein U58 (U58) of Homo sapiens (Human).